A 260-amino-acid chain; its full sequence is DNA repair protein RecO (260 aa).

It belongs to the RecO family.

Its function is as follows. Involved in DNA repair and RecF pathway recombination. The sequence is that of DNA repair protein RecO from Chlorobaculum parvum (strain DSM 263 / NCIMB 8327) (Chlorobium vibrioforme subsp. thiosulfatophilum).